Consider the following 365-residue polypeptide: Elongation factor Tu (365 aa).

GTP contacts are provided by residues 1-7 (HVDHGKT), 62-66 (DCPGH), and 117-120 (NKCD). The region spanning 1 to 185 (HVDHGKTTLT…ILDTYIPEPK (185 aa)) is the tr-type G domain. Thr-7 contributes to the Mg(2+) binding site.

This sequence belongs to the TRAFAC class translation factor GTPase superfamily. Classic translation factor GTPase family. EF-Tu/EF-1A subfamily. Monomer.

The protein localises to the cytoplasm. It carries out the reaction GTP + H2O = GDP + phosphate + H(+). In terms of biological role, GTP hydrolase that promotes the GTP-dependent binding of aminoacyl-tRNA to the A-site of ribosomes during protein biosynthesis. This Buchnera aphidicola subsp. Melaphis rhois protein is Elongation factor Tu.